We begin with the raw amino-acid sequence, 423 residues long: Gamma-glutamyl phosphate reductase (423 aa).

Belongs to the gamma-glutamyl phosphate reductase family.

It localises to the cytoplasm. The enzyme catalyses L-glutamate 5-semialdehyde + phosphate + NADP(+) = L-glutamyl 5-phosphate + NADPH + H(+). It participates in amino-acid biosynthesis; L-proline biosynthesis; L-glutamate 5-semialdehyde from L-glutamate: step 2/2. In terms of biological role, catalyzes the NADPH-dependent reduction of L-glutamate 5-phosphate into L-glutamate 5-semialdehyde and phosphate. The product spontaneously undergoes cyclization to form 1-pyrroline-5-carboxylate. The protein is Gamma-glutamyl phosphate reductase of Burkholderia orbicola (strain MC0-3).